Consider the following 181-residue polypeptide: UPF0215 protein AF_1433 (181 aa).

It belongs to the UPF0215 family.

This Archaeoglobus fulgidus (strain ATCC 49558 / DSM 4304 / JCM 9628 / NBRC 100126 / VC-16) protein is UPF0215 protein AF_1433.